The chain runs to 107 residues: Acetyl-CoA acetyltransferase (107 aa).

Cysteine 88 acts as the Acyl-thioester intermediate in catalysis.

This sequence belongs to the thiolase-like superfamily. Thiolase family. In terms of assembly, homotetramer.

Its subcellular location is the cytoplasm. It carries out the reaction 2 acetyl-CoA = acetoacetyl-CoA + CoA. Its function is as follows. Catalyzes the condensation of two molecules of acetyl-CoA to produce acetoacetyl-CoA. The chain is Acetyl-CoA acetyltransferase (thi) from Clostridioides difficile (Peptoclostridium difficile).